Consider the following 207-residue polypeptide: Ribosomal RNA small subunit methyltransferase G (207 aa).

S-adenosyl-L-methionine-binding positions include glycine 75, phenylalanine 80, 126–127, and arginine 140; that span reads LE.

This sequence belongs to the methyltransferase superfamily. RNA methyltransferase RsmG family.

It localises to the cytoplasm. The catalysed reaction is guanosine(527) in 16S rRNA + S-adenosyl-L-methionine = N(7)-methylguanosine(527) in 16S rRNA + S-adenosyl-L-homocysteine. Specifically methylates the N7 position of guanine in position 527 of 16S rRNA. This is Ribosomal RNA small subunit methyltransferase G from Erythrobacter litoralis (strain HTCC2594).